A 673-amino-acid chain; its full sequence is DNA ligase (673 aa).

Residues 34–38 (DAEYD), 83–84 (SL), and Glu116 each bind NAD(+). The active-site N6-AMP-lysine intermediate is the Lys118. Arg139, Glu176, Lys293, and Lys317 together coordinate NAD(+). Zn(2+)-binding residues include Cys411, Cys414, Cys429, and Cys435. One can recognise a BRCT domain in the interval 595 to 673 (NQQNPFFGKT…EDEFLKWVNS (79 aa)).

Belongs to the NAD-dependent DNA ligase family. LigA subfamily. Mg(2+) is required as a cofactor. Requires Mn(2+) as cofactor.

The enzyme catalyses NAD(+) + (deoxyribonucleotide)n-3'-hydroxyl + 5'-phospho-(deoxyribonucleotide)m = (deoxyribonucleotide)n+m + AMP + beta-nicotinamide D-nucleotide.. DNA ligase that catalyzes the formation of phosphodiester linkages between 5'-phosphoryl and 3'-hydroxyl groups in double-stranded DNA using NAD as a coenzyme and as the energy source for the reaction. It is essential for DNA replication and repair of damaged DNA. This Legionella pneumophila (strain Paris) protein is DNA ligase.